We begin with the raw amino-acid sequence, 402 residues long: CCA-adding enzyme (402 aa).

Residues glycine 32 and arginine 35 each contribute to the ATP site. CTP contacts are provided by glycine 32 and arginine 35. Mg(2+) contacts are provided by aspartate 45 and aspartate 47. 5 residues coordinate ATP: arginine 116, aspartate 159, arginine 162, arginine 165, and arginine 168. Arginine 116, aspartate 159, arginine 162, arginine 165, and arginine 168 together coordinate CTP.

It belongs to the tRNA nucleotidyltransferase/poly(A) polymerase family. Bacterial CCA-adding enzyme type 3 subfamily. As to quaternary structure, homodimer. Mg(2+) serves as cofactor.

It carries out the reaction a tRNA precursor + 2 CTP + ATP = a tRNA with a 3' CCA end + 3 diphosphate. It catalyses the reaction a tRNA with a 3' CCA end + 2 CTP + ATP = a tRNA with a 3' CCACCA end + 3 diphosphate. Catalyzes the addition and repair of the essential 3'-terminal CCA sequence in tRNAs without using a nucleic acid template. Adds these three nucleotides in the order of C, C, and A to the tRNA nucleotide-73, using CTP and ATP as substrates and producing inorganic pyrophosphate. tRNA 3'-terminal CCA addition is required both for tRNA processing and repair. Also involved in tRNA surveillance by mediating tandem CCA addition to generate a CCACCA at the 3' terminus of unstable tRNAs. While stable tRNAs receive only 3'-terminal CCA, unstable tRNAs are marked with CCACCA and rapidly degraded. This Streptococcus thermophilus (strain CNRZ 1066) protein is CCA-adding enzyme.